We begin with the raw amino-acid sequence, 931 residues long: Protein translocase subunit SecA (931 aa).

ATP is bound by residues Q87, 105–109, and D515; that span reads GEGKT. Zn(2+) contacts are provided by C915, C917, C926, and H927.

Belongs to the SecA family. Monomer and homodimer. Part of the essential Sec protein translocation apparatus which comprises SecA, SecYEG and auxiliary proteins SecDF-YajC and YidC. Zn(2+) is required as a cofactor.

It is found in the cell inner membrane. Its subcellular location is the cytoplasm. It catalyses the reaction ATP + H2O + cellular proteinSide 1 = ADP + phosphate + cellular proteinSide 2.. Part of the Sec protein translocase complex. Interacts with the SecYEG preprotein conducting channel. Has a central role in coupling the hydrolysis of ATP to the transfer of proteins into and across the cell membrane, serving both as a receptor for the preprotein-SecB complex and as an ATP-driven molecular motor driving the stepwise translocation of polypeptide chains across the membrane. The sequence is that of Protein translocase subunit SecA from Burkholderia ambifaria (strain ATCC BAA-244 / DSM 16087 / CCUG 44356 / LMG 19182 / AMMD) (Burkholderia cepacia (strain AMMD)).